The sequence spans 655 residues: Sphingomyelin phosphodiesterase 3 (655 aa).

Topologically, residues 1–10 (MVLYTTPFPN) are cytoplasmic. Residues 11 to 31 (SCLSALHAVSWALIFPCYWLV) constitute an intramembrane region (helical). Topologically, residues 32–64 (DRLVASFIPTTYEKRQRADDPCYLQLFCTVLFT) are cytoplasmic. S-palmitoyl cysteine attachment occurs at residues Cys53 and Cys59. Residues 65–85 (PVYLALLVAALPFAFLGFIFW) constitute an intramembrane region (helical). Over 86-655 (SPLQSARRPY…LMVSAGEEEA (570 aa)) the chain is Cytoplasmic. A Phosphoserine modification is found at Ser178. Disordered stretches follow at residues 209–237 (VEYK…DGSL) and 250–320 (GGRA…SNSK). Residues 211 to 221 (YKGDGGRHPSD) show a composition bias toward basic and acidic residues. Ser289 is modified (phosphoserine). Glu362 contributes to the Mg(2+) binding site. 2 S-palmitoyl cysteine lipidation sites follow: Cys395 and Cys396. Residue His639 is the Proton acceptor of the active site.

Belongs to the neutral sphingomyelinase family. Mg(2+) serves as cofactor. Palmitoylated, palmitoylation-deficient proteins are targeted for lysosomal degradation. As to expression, in brain sections, it is restricted to neurons and especially prominent in large cells, including Purkinje cells, pyramidal cells, neurons of the dentate gyrus granular layer, and neurons in the pontine nuclei. Also present in the hypothalamic nuclei, neurons in the piriform cortex, and nuclei of the brainstem (at protein level). Mainly expressed in brain and jejunum. Weakly or not expressed in heart, spleen, lung, liver, kidney and testis.

It localises to the golgi apparatus membrane. It is found in the cell membrane. It catalyses the reaction a sphingomyelin + H2O = phosphocholine + an N-acylsphing-4-enine + H(+). It carries out the reaction N-(15Z-tetracosenoyl)sphing-4-enine-1-phosphocholine + H2O = N-(15Z-tetracosenoyl)-sphing-4-enine + phosphocholine + H(+). The enzyme catalyses N-(tetracosanoyl)-sphing-4-enine-1-phosphocholine + H2O = N-tetracosanoyl-sphing-4-enine + phosphocholine + H(+). The catalysed reaction is an N-(acyl)-sphingosylphosphocholine + H2O = an N-acyl-sphingoid base + phosphocholine + H(+). It catalyses the reaction 1-hexadecanoyl-sn-glycero-3-phosphocholine + H2O = 1-hexadecanoyl-sn-glycerol + phosphocholine + H(+). It carries out the reaction 1-O-octadecyl-sn-glycero-3-phosphocholine + H2O = 1-O-octadecyl-sn-glycerol + phosphocholine + H(+). The enzyme catalyses a sphingosylphosphocholine + H2O = a sphingoid base + phosphocholine + H(+). The catalysed reaction is N-(hexadecanoyl)-sphing-4-enine-1-phosphocholine + H2O = N-hexadecanoylsphing-4-enine + phosphocholine + H(+). The protein operates within lipid metabolism; sphingolipid metabolism. Inhibited by nSMase inhibitor GW4869. Binding of anionic phospholipids (APLs) such as phosphatidylserine (PS) and phosphatidic acid (PA) increases enzymatic activity. In terms of biological role, catalyzes the hydrolysis of sphingomyelin to form ceramide and phosphocholine. Ceramide mediates numerous cellular functions, such as apoptosis and growth arrest, and is capable of regulating these 2 cellular events independently. Also hydrolyzes sphingosylphosphocholine. Binds to anionic phospholipids (APLs) such as phosphatidylserine (PS) and phosphatidic acid (PA) that modulate enzymatic activity and subcellular location. Regulates the cell cycle by acting as a growth suppressor in confluent cells. Acts as a regulator of postnatal development and participates in bone and dentin mineralization. May be involved in IL-1-beta-induced JNK activation in hepatocytes. May act as a mediator in transcriptional regulation of NOS2/iNOS via the NF-kappa-B activation under inflammatory conditions. This Rattus norvegicus (Rat) protein is Sphingomyelin phosphodiesterase 3.